Consider the following 258-residue polypeptide: Synapse differentiation-inducing gene protein 1 (258 aa).

Residues 1-181 are Cytoplasmic-facing; sequence MAGVVEQKSG…NFLVMPPRDH (181 aa). Serine 137 bears the Phosphoserine mark. Residues 182–202 form a helical membrane-spanning segment; that stretch reads LGLSVFSMLCCFWPLGIAAFY. The Extracellular portion of the chain corresponds to 203 to 228; that stretch reads LSHETNKAVAKGDFHQASTSSRRALF. An intramembrane region (helical) is located at residues 229–249; sequence LAVLSITIGTGIYVGVAVALI. The Extracellular segment spans residues 250 to 258; that stretch reads AYLSKSNHL.

The protein belongs to the CD225/Dispanin family. Homodimer. Interacts with GRIA1 and GRIA2.

The protein localises to the cell membrane. The protein resides in the early endosome membrane. It localises to the postsynaptic density membrane. It is found in the synapse. Its subcellular location is the cell projection. The protein localises to the dendrite. The protein resides in the dendritic spine. May regulate AMPA receptor content at nascent synapses, and have a role in postsynaptic development and maturation. This chain is Synapse differentiation-inducing gene protein 1 (SYNDIG1), found in Bos taurus (Bovine).